The chain runs to 487 residues: Malonate-semialdehyde dehydrogenase (487 aa).

The NAD(+) site is built by Ala-150, Phe-152, Lys-176, Glu-179, Arg-180, Ser-229, and Thr-251. Cys-284 functions as the Nucleophile in the catalytic mechanism. Glu-382 is a binding site for NAD(+).

The protein belongs to the aldehyde dehydrogenase family. IolA subfamily. Homotetramer.

It catalyses the reaction 3-oxopropanoate + NAD(+) + CoA + H2O = hydrogencarbonate + acetyl-CoA + NADH + H(+). It carries out the reaction 2-methyl-3-oxopropanoate + NAD(+) + CoA + H2O = propanoyl-CoA + hydrogencarbonate + NADH + H(+). It participates in polyol metabolism; myo-inositol degradation into acetyl-CoA; acetyl-CoA from myo-inositol: step 7/7. Functionally, catalyzes the oxidation of malonate semialdehyde (MSA) and methylmalonate semialdehyde (MMSA) into acetyl-CoA and propanoyl-CoA, respectively. Is involved in a myo-inositol catabolic pathway. Bicarbonate, and not CO2, is the end-product of the enzymatic reaction. This Bacillus subtilis subsp. natto protein is Malonate-semialdehyde dehydrogenase.